Here is a 249-residue protein sequence, read N- to C-terminus: Galactan endo-beta-1,3-galactanase (249 aa).

The N-terminal stretch at 1-21 (MKLFVVLACLAAPGTFPFVDA) is a signal peptide. One can recognise a GH16 domain in the interval 34–247 (STYWNNFYPW…KARNVQVTRT (214 aa)). N-linked (GlcNAc...) asparagine glycosylation occurs at asparagine 48. The active-site Nucleophile is the glutamate 138. Glutamate 143 (proton donor) is an active-site residue. N-linked (GlcNAc...) asparagine glycosylation is present at asparagine 156.

The protein belongs to the glycosyl hydrolase 16 family. In terms of processing, N-glycosylated.

The enzyme catalyses The enzyme specifically hydrolyzes beta-1,3-galactan and beta-1,3-galactooligosaccharides.. In terms of biological role, specifically hydrolyzes beta-1,3-galactan in an endo-fashion. Requires at least 3 contiguous beta-1,3-residues. This is Galactan endo-beta-1,3-galactanase (EN3GAL) from Flammulina velutipes (Agaricus velutipes).